Consider the following 164-residue polypeptide: 2S seed storage protein 1 (164 aa).

Positions 1 to 21 (MANKLFLVCAALALCFLLTNA) are cleaved as a signal peptide. 3 propeptides span residues 22–37 (SIYRTVVEFEEDDATN), 74–83 (EFDFEDDMEN), and 163–164 (FY).

It belongs to the 2S seed storage albumins family. As to quaternary structure, the mature protein consists of a small and a large chain linked by disulfide bonds.

Functionally, this is a 2S seed storage protein. In Arabidopsis thaliana (Mouse-ear cress), this protein is 2S seed storage protein 1 (AT2S1).